We begin with the raw amino-acid sequence, 126 residues long: Aspartate 1-decarboxylase (126 aa).

S25 serves as the catalytic Schiff-base intermediate with substrate; via pyruvic acid. S25 is subject to Pyruvic acid (Ser). T57 contacts substrate. Catalysis depends on Y58, which acts as the Proton donor. 73–75 (GAA) lines the substrate pocket.

Belongs to the PanD family. As to quaternary structure, heterooctamer of four alpha and four beta subunits. Pyruvate serves as cofactor. Is synthesized initially as an inactive proenzyme, which is activated by self-cleavage at a specific serine bond to produce a beta-subunit with a hydroxyl group at its C-terminus and an alpha-subunit with a pyruvoyl group at its N-terminus.

It is found in the cytoplasm. The enzyme catalyses L-aspartate + H(+) = beta-alanine + CO2. Its pathway is cofactor biosynthesis; (R)-pantothenate biosynthesis; beta-alanine from L-aspartate: step 1/1. Catalyzes the pyruvoyl-dependent decarboxylation of aspartate to produce beta-alanine. In Escherichia coli O6:K15:H31 (strain 536 / UPEC), this protein is Aspartate 1-decarboxylase.